The primary structure comprises 226 residues: 7-cyano-7-deazaguanine synthase (226 aa).

11–21 (LSGGLDSATCL) contacts ATP. Zn(2+) contacts are provided by Cys-191, Cys-201, Cys-204, and Cys-207.

It belongs to the QueC family. It depends on Zn(2+) as a cofactor.

The catalysed reaction is 7-carboxy-7-deazaguanine + NH4(+) + ATP = 7-cyano-7-deazaguanine + ADP + phosphate + H2O + H(+). It functions in the pathway purine metabolism; 7-cyano-7-deazaguanine biosynthesis. In terms of biological role, catalyzes the ATP-dependent conversion of 7-carboxy-7-deazaguanine (CDG) to 7-cyano-7-deazaguanine (preQ(0)). The protein is 7-cyano-7-deazaguanine synthase of Aromatoleum aromaticum (strain DSM 19018 / LMG 30748 / EbN1) (Azoarcus sp. (strain EbN1)).